A 508-amino-acid chain; its full sequence is Nucleolar complex protein 4 homolog (508 aa).

3 consecutive transmembrane segments (helical) span residues 288 to 308, 341 to 361, and 367 to 387; these read VAYG…FILI, HLAD…AAFI, and LALT…CNLF.

Belongs to the CBF/MAK21 family.

It localises to the nucleus membrane. The protein localises to the nucleus. The protein resides in the nucleolus. The protein is Nucleolar complex protein 4 homolog (NOC4L) of Gallus gallus (Chicken).